The chain runs to 382 residues: Lipid-A-disaccharide synthase (382 aa).

The protein belongs to the LpxB family.

The catalysed reaction is 2-N,3-O-bis[(3R)-3-hydroxytetradecanoyl]-alpha-D-glucosaminyl 1-phosphate + UDP-2-N,3-O-bis[(3R)-3-hydroxytetradecanoyl]-alpha-D-glucosamine = lipid A disaccharide (E. coli) + UDP + H(+). The enzyme catalyses a lipid X + a UDP-2-N,3-O-bis[(3R)-3-hydroxyacyl]-alpha-D-glucosamine = a lipid A disaccharide + UDP + H(+). It participates in glycolipid biosynthesis; lipid IV(A) biosynthesis; lipid IV(A) from (3R)-3-hydroxytetradecanoyl-[acyl-carrier-protein] and UDP-N-acetyl-alpha-D-glucosamine: step 5/6. In terms of biological role, condensation of UDP-2,3-diacylglucosamine and 2,3-diacylglucosamine-1-phosphate to form lipid A disaccharide, a precursor of lipid A, a phosphorylated glycolipid that anchors the lipopolysaccharide to the outer membrane of the cell. The polypeptide is Lipid-A-disaccharide synthase (Salmonella heidelberg (strain SL476)).